The following is an 85-amino-acid chain: Large ribosomal subunit protein bL27 (85 aa).

The tract at residues 1 to 20 (MATKKAGGSTRNGRDSEAKR) is disordered.

Belongs to the bacterial ribosomal protein bL27 family.

The sequence is that of Large ribosomal subunit protein bL27 from Pasteurella multocida (strain Pm70).